A 117-amino-acid polypeptide reads, in one-letter code: uncharacterized protein (117 aa).

This is an uncharacterized protein from Bacillus subtilis (strain 168).